The chain runs to 2347 residues: Proto-oncogene tyrosine-protein kinase ROS (2347 aa).

An N-terminal signal peptide occupies residues 1 to 27; that stretch reads MKNIYCLIPKLVNFATLGCLWISVVQC. At 28 to 1859 the chain is on the extracellular side; sequence TVLNSCLKSC…LVGDDFWIPE (1832 aa). Asparagine 52, asparagine 114, and asparagine 123 each carry an N-linked (GlcNAc...) asparagine glycan. 2 Fibronectin type-III domains span residues 101-196 and 197-285; these read LPTA…VPET and APLI…SSSA. 27 N-linked (GlcNAc...) asparagine glycosylation sites follow: asparagine 324, asparagine 352, asparagine 396, asparagine 471, asparagine 607, asparagine 628, asparagine 706, asparagine 714, asparagine 732, asparagine 939, asparagine 961, asparagine 1015, asparagine 1087, asparagine 1090, asparagine 1095, asparagine 1211, asparagine 1272, asparagine 1330, asparagine 1458, asparagine 1461, asparagine 1474, asparagine 1499, asparagine 1565, asparagine 1669, asparagine 1715, asparagine 1738, and asparagine 1808. The Fibronectin type-III 3 domain maps to 557–671; the sequence is LPGRPQELSV…EPSVGTTLVP (115 aa). 2 Fibronectin type-III domains span residues 947–1042 and 1043–1150; these read IPDS…TVPS and APEN…TSEI. Fibronectin type-III domains follow at residues 1450–1556, 1557–1656, 1658–1751, and 1752–1854; these read DTVE…TKNG, VPEA…VEMF, TPEK…TKAG, and VPNK…VGDD. A helical membrane pass occupies residues 1860-1882; the sequence is TSFILTIIVGIFLVVTIPLTFVW. Residues 1883-2347 lie on the Cytoplasmic side of the membrane; sequence HRRLKNQKSA…THSGYGDGSD (465 aa). One can recognise a Protein kinase domain in the interval 1945–2222; that stretch reads LTLRLLLGSG…DQLQLFRNFF (278 aa). ATP is bound by residues 1951-1959 and lysine 1980; that span reads LGSGAFGEV. Aspartate 2079 functions as the Proton acceptor in the catalytic mechanism. Tyrosine 2274 carries the post-translational modification Phosphotyrosine; by autocatalysis. Positions 2284–2311 are disordered; it reads GEEKSEGPLGSQESESCGLRKEEKEPHA. Over residues 2301–2311 the composition is skewed to basic and acidic residues; it reads GLRKEEKEPHA. Tyrosine 2334 carries the phosphotyrosine; by autocatalysis modification.

Belongs to the protein kinase superfamily. Tyr protein kinase family. Insulin receptor subfamily. Interacts with PTPN6 (via SH2 1 domain); the interaction is direct and promotes ROS1 dephosphorylation. Interacts with PTPN11; may activate the PI3 kinase-mTOR signaling pathway. Interacts with VAV3; constitutive interaction mediating VAV3 phosphorylation. Phosphorylated. Probably autophosphorylates. Phosphorylation at Tyr-2274 is required for the interaction with PTPN6 that mediates ROS1 dephosphorylation. Phosphorylation at Tyr-2274 stimulates the kinase activity and the activation of the ERK1 signaling cascade. Phosphorylation at Tyr-2274 and/or Tyr-2334 recruits PTPN11. As to expression, expressed in brain. Expression is increased in primary gliomas.

The protein resides in the cell membrane. The catalysed reaction is L-tyrosyl-[protein] + ATP = O-phospho-L-tyrosyl-[protein] + ADP + H(+). Inhibited by dephosphorylation by PTPN6. In terms of biological role, receptor tyrosine kinase (RTK) that plays a role in epithelial cell differentiation and regionalization of the proximal epididymal epithelium. NELL2 is an endogenous ligand for ROS1. Upon endogenous stimulation by NELL2, ROS1 activates the intracellular signaling pathway and triggers epididymal epithelial differentiation and subsequent sperm maturation. May activate several downstream signaling pathways related to cell differentiation, proliferation, growth and survival including the PI3 kinase-mTOR signaling pathway. Mediates the phosphorylation of PTPN11, an activator of this pathway. May also phosphorylate and activate the transcription factor STAT3 to control anchorage-independent cell growth. Mediates the phosphorylation and the activation of VAV3, a guanine nucleotide exchange factor regulating cell morphology. May activate other downstream signaling proteins including AKT1, MAPK1, MAPK3, IRS1 and PLCG2. This Homo sapiens (Human) protein is Proto-oncogene tyrosine-protein kinase ROS (ROS1).